Consider the following 706-residue polypeptide: Methionine--tRNA ligase (706 aa).

A 'HIGH' region motif is present at residues 13-23 (PYANGNFHIGH). Cys144, Cys147, Cys157, and Cys160 together coordinate Zn(2+). Residues 341–345 (KMSKS) carry the 'KMSKS' region motif. Lys344 provides a ligand contact to ATP. In terms of domain architecture, tRNA-binding spans 600–706 (DFAKIDLRIA…PGATPGMRVR (107 aa)).

It belongs to the class-I aminoacyl-tRNA synthetase family. MetG type 1 subfamily. Homodimer. Zn(2+) serves as cofactor.

Its subcellular location is the cytoplasm. It carries out the reaction tRNA(Met) + L-methionine + ATP = L-methionyl-tRNA(Met) + AMP + diphosphate. Its function is as follows. Is required not only for elongation of protein synthesis but also for the initiation of all mRNA translation through initiator tRNA(fMet) aminoacylation. In Paracidovorax citrulli (strain AAC00-1) (Acidovorax citrulli), this protein is Methionine--tRNA ligase.